Consider the following 417-residue polypeptide: Multifunctional CCA protein (417 aa).

2 residues coordinate ATP: Gly-8 and Arg-11. CTP is bound by residues Gly-8 and Arg-11. Positions 21 and 23 each coordinate Mg(2+). ATP-binding residues include Arg-91, Arg-143, and Arg-146. 3 residues coordinate CTP: Arg-91, Arg-143, and Arg-146. The 102-residue stretch at 232-333 folds into the HD domain; the sequence is TGVHVMMVVD…VRLFERSDAL (102 aa).

It belongs to the tRNA nucleotidyltransferase/poly(A) polymerase family. Bacterial CCA-adding enzyme type 1 subfamily. As to quaternary structure, monomer. Can also form homodimers and oligomers. Mg(2+) serves as cofactor. It depends on Ni(2+) as a cofactor.

The catalysed reaction is a tRNA precursor + 2 CTP + ATP = a tRNA with a 3' CCA end + 3 diphosphate. It carries out the reaction a tRNA with a 3' CCA end + 2 CTP + ATP = a tRNA with a 3' CCACCA end + 3 diphosphate. Catalyzes the addition and repair of the essential 3'-terminal CCA sequence in tRNAs without using a nucleic acid template. Adds these three nucleotides in the order of C, C, and A to the tRNA nucleotide-73, using CTP and ATP as substrates and producing inorganic pyrophosphate. tRNA 3'-terminal CCA addition is required both for tRNA processing and repair. Also involved in tRNA surveillance by mediating tandem CCA addition to generate a CCACCA at the 3' terminus of unstable tRNAs. While stable tRNAs receive only 3'-terminal CCA, unstable tRNAs are marked with CCACCA and rapidly degraded. The protein is Multifunctional CCA protein of Paraburkholderia phymatum (strain DSM 17167 / CIP 108236 / LMG 21445 / STM815) (Burkholderia phymatum).